Here is a 192-residue protein sequence, read N- to C-terminus: Xanthine phosphoribosyltransferase (192 aa).

2 residues coordinate xanthine: L20 and N27. Residue 128–132 (ANGDA) participates in 5-phospho-alpha-D-ribose 1-diphosphate binding. K156 contacts xanthine.

Belongs to the purine/pyrimidine phosphoribosyltransferase family. Xpt subfamily. Homodimer.

The protein localises to the cytoplasm. It catalyses the reaction XMP + diphosphate = xanthine + 5-phospho-alpha-D-ribose 1-diphosphate. Its pathway is purine metabolism; XMP biosynthesis via salvage pathway; XMP from xanthine: step 1/1. In terms of biological role, converts the preformed base xanthine, a product of nucleic acid breakdown, to xanthosine 5'-monophosphate (XMP), so it can be reused for RNA or DNA synthesis. This Staphylococcus aureus (strain JH1) protein is Xanthine phosphoribosyltransferase.